Reading from the N-terminus, the 163-residue chain is Nucleotide-binding protein LBJ_2391 (163 aa).

The protein belongs to the YajQ family.

Its function is as follows. Nucleotide-binding protein. In Leptospira borgpetersenii serovar Hardjo-bovis (strain JB197), this protein is Nucleotide-binding protein LBJ_2391.